A 77-amino-acid polypeptide reads, in one-letter code: MNRIIFCTFFKKKSEGQDFQSYPGKLGKKIYDQISKKAWEKWIEKQTILINEENLNMFNLEHRKKIEKYMKLFLFKK.

The protein belongs to the Fe(2+)-trafficking protein family. In terms of assembly, monomer.

Its function is as follows. Could be a mediator in iron transactions between iron acquisition and iron-requiring processes, such as synthesis and/or repair of Fe-S clusters in biosynthetic enzymes. This is Probable Fe(2+)-trafficking protein from Buchnera aphidicola subsp. Acyrthosiphon pisum (strain APS) (Acyrthosiphon pisum symbiotic bacterium).